A 121-amino-acid chain; its full sequence is Holo-[acyl-carrier-protein] synthase (121 aa).

Mg(2+) is bound by residues D8 and E58.

Belongs to the P-Pant transferase superfamily. AcpS family. As to quaternary structure, homotrimer. Mg(2+) is required as a cofactor.

The protein resides in the cytoplasm. The catalysed reaction is apo-[ACP] + CoA = holo-[ACP] + adenosine 3',5'-bisphosphate + H(+). In terms of biological role, transfers the 4'-phosphopantetheine moiety from coenzyme A to a Ser of fatty acid acyl-carrier-protein ACP. Also modifies the D-alanyl carrier protein but fails to recognize PCP and AcpK, an acyl carrier protein of secondary metabolism. This chain is Holo-[acyl-carrier-protein] synthase, found in Bacillus subtilis (strain 168).